We begin with the raw amino-acid sequence, 652 residues long: Ethylmalonyl-CoA mutase (652 aa).

The B12-binding domain occupies 519 to 647; sequence PLKFVVGKPG…MDIVGLVDRT (129 aa). H532 provides a ligand contact to adenosylcob(III)alamin.

The protein belongs to the methylmalonyl-CoA mutase family. In terms of assembly, homodimer. Adenosylcob(III)alamin is required as a cofactor.

The catalysed reaction is (2R)-ethylmalonyl-CoA = (2S)-methylsuccinyl-CoA. In terms of biological role, radical enzyme that catalyzes the transformation of (2R)-ethylmalonyl-CoA to (2S)-methylsuccinyl-CoA. Is involved in the ethylmalonyl-CoA pathway for acetyl-CoA assimilation required for R.sphaeroides growth on acetate as sole carbon source. Is highly specific for its substrate, ethylmalonyl-CoA, and accepts methylmalonyl-CoA only at 0.2% relative activity. The sequence is that of Ethylmalonyl-CoA mutase from Cereibacter sphaeroides (strain ATCC 17023 / DSM 158 / JCM 6121 / CCUG 31486 / LMG 2827 / NBRC 12203 / NCIMB 8253 / ATH 2.4.1.) (Rhodobacter sphaeroides).